Reading from the N-terminus, the 476-residue chain is Transcription factor Sox-9-B (476 aa).

Disordered regions lie at residues 1-67 (MNLL…TEDE), 157-197 (EAER…EQTH), and 209-274 (ADSP…FRDV). Residues 30–41 (SAGSPCPSGSGS) show a composition bias toward low complexity. Polar residues predominate over residues 42–52 (DTENTRPQENT). Basic and acidic residues-rich tracts occupy residues 56-67 (GDQEMKKETEDE) and 157-174 (EAERLRVQHKKDHPDYKY). A Glycyl lysine isopeptide (Lys-Gly) (interchain with G-Cter in SUMO) cross-link involves residue K61. The segment at residues 105-173 (VKRPMNAFMV…QHKKDHPDYK (69 aa)) is a DNA-binding region (HMG box). The span at 211-220 (SPHSTSSMSE) shows a compositional bias: polar residues. Short sequence motifs (9aaTAD) lie at residues 276–285 (IGELSSEVIS) and 291–299 (DVNEFDQYL). Residues 318–383 (YGISSTPSAT…SDQQQQHSPQ (66 aa)) are disordered. The segment covering 319–344 (GISSTPSATTGAGSAWMSKQQQQPQQ) has biased composition (low complexity). The segment covering 345 to 360 (HSLSTINSEQSQSQQR) has biased composition (polar residues). K364 is covalently cross-linked (Glycyl lysine isopeptide (Lys-Gly) (interchain with G-Cter in SUMO)). Residues 369–383 (SPSHYSDQQQQHSPQ) are compositionally biased toward low complexity. The 9aaTAD 3 signature appears at 427–435 (SGLYSNFTY). Positions 443–476 (MYTPIADTTGVPSIPQTHSPQHWEQPVYTQLTRP) are disordered. The segment covering 452 to 476 (GVPSIPQTHSPQHWEQPVYTQLTRP) has biased composition (polar residues).

Interacts with the sumoylation factors ube2i/ubc9 and sumo1. In terms of processing, sumoylated. Lys-364 is the major site of sumoylation, although sumoylation at Lys-61 also occurs. Sumoylation plays a key role in regulating formation of the neural crest and otic placode.

It is found in the nucleus. It localises to the cytoplasm. Transcription factor that plays a key role in chondrocytes differentiation and skeletal development. Specifically binds the 5'-ACAAAG-3' DNA motif present in enhancers and super-enhancers and promotes expression of genes important for chondrogenesis, including COL2A1. Plays a central role in successive steps of chondrocyte differentiation. Absolutely required for precartilaginous condensation, the first step in chondrogenesis during which skeletal progenitors differentiate into prechondrocytes. Together with SOX5 and SOX6, required for overt chondrogenesis when condensed prechondrocytes differentiate into early stage chondrocytes, the second step in chondrogenesis. Later, required to direct hypertrophic maturation and block osteoblast differentiation of growth plate chondrocytes: maintains chondrocyte columnar proliferation, delays prehypertrophy and then prevents osteoblastic differentiation of chondrocytes. Also required for chondrocyte hypertrophy, both indirectly, by keeping the lineage fate of chondrocytes, and directly, by remaining present in upper hypertrophic cells. Low lipid levels are the main nutritional determinant for chondrogenic commitment of skeletal progenitor cells: when lipids levels are low, FOXO transcription factors promote expression of SOX9, which induces chondrogenic commitment and suppresses fatty acid oxidation. In addition to cartilage development, also acts as a regulator of proliferation and differentiation in epithelial stem/progenitor cells. The polypeptide is Transcription factor Sox-9-B (sox9-b) (Xenopus laevis (African clawed frog)).